The sequence spans 404 residues: Exodeoxyribonuclease 7 large subunit (404 aa).

It belongs to the XseA family. As to quaternary structure, heterooligomer composed of large and small subunits.

It is found in the cytoplasm. The enzyme catalyses Exonucleolytic cleavage in either 5'- to 3'- or 3'- to 5'-direction to yield nucleoside 5'-phosphates.. Bidirectionally degrades single-stranded DNA into large acid-insoluble oligonucleotides, which are then degraded further into small acid-soluble oligonucleotides. The chain is Exodeoxyribonuclease 7 large subunit from Tropheryma whipplei (strain TW08/27) (Whipple's bacillus).